Reading from the N-terminus, the 361-residue chain is Phospho-N-acetylmuramoyl-pentapeptide-transferase (361 aa).

Transmembrane regions (helical) follow at residues 28–48 (LAIIITLSLSFITGPILIKFL), 74–94 (TMGGIMIILSSCLSTLLLADL), 99–119 (IWITLFGFISFGIIGFMDDYA), 133–153 (SKLLLQGIISFIICVLLEYLD), 168–188 (LSLDLGYFYIVFAMFVIVGSS), 203–223 (VPIAFTAGSFALISYLVGNLI), 236–256 (TGELTVLCAGLVGSCLGFLWF), 263–283 (VFMGDTGSLSLGGVLGIISVI), 288–308 (IVLAIVGGLFVIETTSVILQV), and 338–358 (KVVIRFWIISVIFALIGLSSL).

This sequence belongs to the glycosyltransferase 4 family. MraY subfamily. Mg(2+) is required as a cofactor.

Its subcellular location is the cell membrane. It carries out the reaction UDP-N-acetyl-alpha-D-muramoyl-L-alanyl-gamma-D-glutamyl-meso-2,6-diaminopimeloyl-D-alanyl-D-alanine + di-trans,octa-cis-undecaprenyl phosphate = di-trans,octa-cis-undecaprenyl diphospho-N-acetyl-alpha-D-muramoyl-L-alanyl-D-glutamyl-meso-2,6-diaminopimeloyl-D-alanyl-D-alanine + UMP. It functions in the pathway cell wall biogenesis; peptidoglycan biosynthesis. In terms of biological role, catalyzes the initial step of the lipid cycle reactions in the biosynthesis of the cell wall peptidoglycan: transfers peptidoglycan precursor phospho-MurNAc-pentapeptide from UDP-MurNAc-pentapeptide onto the lipid carrier undecaprenyl phosphate, yielding undecaprenyl-pyrophosphoryl-MurNAc-pentapeptide, known as lipid I. The protein is Phospho-N-acetylmuramoyl-pentapeptide-transferase of Rickettsia montanensis.